The primary structure comprises 311 residues: Aquaporin-1 (311 aa).

The Cytoplasmic portion of the chain corresponds to 1 to 16; the sequence is MHPQVASLFDNVYEDL. A helical membrane pass occupies residues 17–37; sequence AAATLEFIGTAFFLLFGLGGI. Residues 38-56 lie on the Extracellular side of the membrane; it reads QASTAEDTASSQPPASGIE. A helical membrane pass occupies residues 57–77; sequence HVLYISTCMGFSLVVSAWLFF. Position 78 (arginine 78) is a topological domain, cytoplasmic. Residues 79–99 form a helical membrane-spanning segment; the sequence is VTGGLFNPNISFALLLVGGLK. The NPA 1 motif lies at 85 to 87; sequence NPN. A topological domain (extracellular) is located at residue proline 100. A helical membrane pass occupies residues 101 to 121; it reads LRFVLFCIAQLTGAIAGAAIV. Over 122 to 143 the chain is Cytoplasmic; the sequence is RGLTSAPLSVNNVLQQGTSAAQ. Residues 144 to 164 traverse the membrane as a helical segment; that stretch reads GVFIEMFITAALVLSVLMLAA. Residues 165-168 lie on the Extracellular side of the membrane; that stretch reads EKHE. Residues 169–189 form a helical membrane-spanning segment; that stretch reads ATPFAPVGIGLTLFACHLFAV. The Cytoplasmic segment spans residues 190 to 215; that stretch reads YYTGAAMNSARAFGPAVISGFPEPQH. The short motif at 197–199 is the NPA 2 element; it reads NSA. A helical transmembrane segment spans residues 216-236; it reads WVYWVGPFLGSLLGAGFYATL. The Extracellular segment spans residues 237-311; that stretch reads KHYKYWRLNP…TSSRTNFSPV (75 aa). Positions 276–311 are disordered; that stretch reads DEETRNGCASNEEGVRATGDEKSSNATSSRTNFSPV. Over residues 288–298 the composition is skewed to basic and acidic residues; the sequence is EGVRATGDEKS. Positions 299-311 are enriched in polar residues; the sequence is SNATSSRTNFSPV. A glycan (N-linked (GlcNAc...) asparagine) is linked at asparagine 300.

This sequence belongs to the MIP/aquaporin (TC 1.A.8) family.

The protein resides in the cell membrane. The catalysed reaction is H2O(in) = H2O(out). It catalyses the reaction H2O2(out) = H2O2(in). The enzyme catalyses nitric oxide(out) = nitric oxide(in). It carries out the reaction CO2(out) = CO2(in). Water channel required to facilitate the transport of water across membranes. Also mediates the transport nitric oxide, hydrogen peroxide and carbon dioxide across the membrane. Required for Hartig net development in trembling aspen trees. Contributes in fungal cellular processes during the basidiocarp formation. The sequence is that of Aquaporin-1 from Laccaria bicolor (Bicoloured deceiver).